Reading from the N-terminus, the 305-residue chain is MTDPTGTGTLHESAHAKINLYLHVTGRRPDGYHLLDSLAVFAGAADRLTLRPGAAGQGEAVALDIAGAFGAGLVADTDSNLVLQAARRLRAEMGVTDRLAPMRIVLEKSLPVASGIGGGSADAAAALRLLLRAWPGEALPRARLMALAVELGADVPVCIDQRAARMGGVGERLAPAPALPNCGMMLVNCGEAVPTPAVFRARAPVFTPAASLPSAWPDVGAMVRDLAALTNDLQDAACELCPTIRTVLQVLDAAPGCRLARMSGSGATCFALFDSPQGARDAMTAVERPGWWVWAGGLHGMPAET.

Residue Lys17 is part of the active site. Residue 111–121 (PVASGIGGGSA) participates in ATP binding. Asp154 is an active-site residue.

Belongs to the GHMP kinase family. IspE subfamily.

The enzyme catalyses 4-CDP-2-C-methyl-D-erythritol + ATP = 4-CDP-2-C-methyl-D-erythritol 2-phosphate + ADP + H(+). It participates in isoprenoid biosynthesis; isopentenyl diphosphate biosynthesis via DXP pathway; isopentenyl diphosphate from 1-deoxy-D-xylulose 5-phosphate: step 3/6. Catalyzes the phosphorylation of the position 2 hydroxy group of 4-diphosphocytidyl-2C-methyl-D-erythritol. This Gluconacetobacter diazotrophicus (strain ATCC 49037 / DSM 5601 / CCUG 37298 / CIP 103539 / LMG 7603 / PAl5) protein is 4-diphosphocytidyl-2-C-methyl-D-erythritol kinase.